We begin with the raw amino-acid sequence, 327 residues long: D-alanine--D-alanine ligase (327 aa).

The region spanning 113 to 312 (KRLWMTHGLA…YEDFVLQVLA (200 aa)) is the ATP-grasp domain. Residue 139–194 (VADLGLPLIVKPAREGSSIGLTKVTAADQMRAAFDKAAALDNDVIAETFVDGAELT) participates in ATP binding. Positions 266, 279, and 281 each coordinate Mg(2+).

Belongs to the D-alanine--D-alanine ligase family. The cofactor is Mg(2+). Requires Mn(2+) as cofactor.

It is found in the cytoplasm. It catalyses the reaction 2 D-alanine + ATP = D-alanyl-D-alanine + ADP + phosphate + H(+). It participates in cell wall biogenesis; peptidoglycan biosynthesis. Cell wall formation. This is D-alanine--D-alanine ligase from Cupriavidus taiwanensis (strain DSM 17343 / BCRC 17206 / CCUG 44338 / CIP 107171 / LMG 19424 / R1) (Ralstonia taiwanensis (strain LMG 19424)).